The sequence spans 173 residues: Alpha-crystallin A chain (173 aa).

The residue at position 1 (Met1) is an N-acetylmethionine. The required for complex formation with BFSP1 and BFSP2 stretch occupies residues 1-63 (MDVTIQHPWF…RTVLDSGVSE (63 aa)). Gln6 carries the post-translational modification Deamidated glutamine; partial. Ser45 is modified (phosphoserine). Gln50 is modified (deamidated glutamine; partial). In terms of domain architecture, sHSP spans 52 to 162 (LFRTVLDSGV…GHSERAIPVS (111 aa)). N6-acetyllysine is present on Lys70. Deamidated glutamine; partial is present on Gln90. At Lys99 the chain carries N6-acetyllysine. Residue His100 participates in Zn(2+) binding. Asn101 is subject to Deamidated asparagine; partial. Zn(2+) is bound by residues Glu102 and His107. At Ser122 the chain carries Phosphoserine. Asn123 bears the Deamidated asparagine; partial mark. The segment at 145 to 173 (KVQSGLDAGHSERAIPVSREEKPSSAPSS) is disordered. Gln147 bears the Deamidated glutamine; partial mark. Residues 153–167 (GHSERAIPVSREEKP) show a composition bias toward basic and acidic residues. His154 lines the Zn(2+) pocket. O-linked (GlcNAc) serine glycosylation occurs at Ser162.

Belongs to the small heat shock protein (HSP20) family. Heteromer composed of three CRYAA and one CRYAB subunits. Inter-subunit bridging via zinc ions enhances stability, which is crucial as there is no protein turn over in the lens. Can also form homodimers and homotetramers (dimers of dimers) which serve as the building blocks of homooligomers. Within homooligomers, the zinc-binding motif is created from residues of 3 different molecules. His-100 and Glu-102 from one molecule are ligands of the zinc ion, and His-107 and His-154 residues from additional molecules complete the site with tetrahedral coordination geometry. Part of a complex required for lens intermediate filament formation composed of BFSP1, BFSP2 and CRYAA. In terms of processing, acetylation at Lys-70 may increase chaperone activity. Post-translationally, undergoes age-dependent proteolytical cleavage at the C-terminus.

The protein resides in the cytoplasm. It is found in the nucleus. Functionally, contributes to the transparency and refractive index of the lens. Acts as a chaperone, preventing aggregation of various proteins under a wide range of stress conditions. Required for the correct formation of lens intermediate filaments as part of a complex composed of BFSP1, BFSP2 and CRYAA. This is Alpha-crystallin A chain (CRYAA) from Eulemur fulvus fulvus (Brown lemur).